Consider the following 227-residue polypeptide: Ribose-5-phosphate isomerase A (227 aa).

Substrate-binding positions include 26 to 29 (TGST), 82 to 85 (DGAD), and 95 to 98 (KGGG). Glu104 functions as the Proton acceptor in the catalytic mechanism. Lys122 serves as a coordination point for substrate.

It belongs to the ribose 5-phosphate isomerase family. Homodimer.

It carries out the reaction aldehydo-D-ribose 5-phosphate = D-ribulose 5-phosphate. It functions in the pathway carbohydrate degradation; pentose phosphate pathway; D-ribose 5-phosphate from D-ribulose 5-phosphate (non-oxidative stage): step 1/1. In terms of biological role, catalyzes the reversible conversion of ribose-5-phosphate to ribulose 5-phosphate. The protein is Ribose-5-phosphate isomerase A of Streptococcus pneumoniae (strain ATCC 700669 / Spain 23F-1).